The following is a 183-amino-acid chain: Large ribosomal subunit protein bL17 (183 aa).

Residues 130–150 (GTKFAKDEKAKAEATEAKAEE) show a composition bias toward basic and acidic residues. The interval 130 to 183 (GTKFAKDEKAKAEATEAKAEETTETTESTEAESTEAPAEEAKAEDTAAEKKDES) is disordered. The segment covering 151–162 (TTETTESTEAES) has biased composition (acidic residues). Over residues 168–183 (EEAKAEDTAAEKKDES) the composition is skewed to basic and acidic residues.

This sequence belongs to the bacterial ribosomal protein bL17 family. As to quaternary structure, part of the 50S ribosomal subunit. Contacts protein L32.

This is Large ribosomal subunit protein bL17 from Saccharopolyspora erythraea (strain ATCC 11635 / DSM 40517 / JCM 4748 / NBRC 13426 / NCIMB 8594 / NRRL 2338).